Reading from the N-terminus, the 405-residue chain is Glucose-1-phosphate adenylyltransferase 1 (405 aa).

Residues tyrosine 96, glycine 161, 176-177, and serine 194 contribute to the alpha-D-glucose 1-phosphate site; that span reads EK.

It belongs to the bacterial/plant glucose-1-phosphate adenylyltransferase family. Homotetramer.

The enzyme catalyses alpha-D-glucose 1-phosphate + ATP + H(+) = ADP-alpha-D-glucose + diphosphate. The protein operates within glycan biosynthesis; glycogen biosynthesis. In terms of biological role, involved in the biosynthesis of ADP-glucose, a building block required for the elongation reactions to produce glycogen. Catalyzes the reaction between ATP and alpha-D-glucose 1-phosphate (G1P) to produce pyrophosphate and ADP-Glc. The protein is Glucose-1-phosphate adenylyltransferase 1 of Vibrio parahaemolyticus serotype O3:K6 (strain RIMD 2210633).